Consider the following 410-residue polypeptide: Structure-specific endonuclease subunit SLX1 homolog (410 aa).

In terms of domain architecture, GIY-YIG spans 6-89 (QLHYCYFLLS…NICKVTRDNI (84 aa)).

The protein belongs to the SLX1 family. As to quaternary structure, forms a heterodimer with a member of the SLX4 family. A divalent metal cation serves as cofactor.

The protein localises to the nucleus. Catalytic subunit of a heterodimeric structure-specific endonuclease that resolves DNA secondary structures generated during DNA repair and recombination. Has endonuclease activity towards branched DNA substrates, introducing single-strand cuts in duplex DNA close to junctions with ss-DNA. The sequence is that of Structure-specific endonuclease subunit SLX1 homolog from Cryptosporidium parvum (strain Iowa II).